The primary structure comprises 408 residues: S-adenosylmethionine sensor upstream of mTORC1 (408 aa).

Over residues 1 to 16 (MEAAPRSRPRPGGAAA) the composition is skewed to low complexity. The interval 1 to 37 (MEAAPRSRPRPGGAAASPPPPPPPPPPEQERKLEQEK) is disordered. The span at 17–27 (SPPPPPPPPPP) shows a compositional bias: pro residues. Residues 28 to 37 (EQERKLEQEK) show a composition bias toward basic and acidic residues. S-adenosyl-L-methionine contacts are provided by R97, G175, D193, D205, F206, and S247.

This sequence belongs to the BMT2/SAMTOR family. Interacts with the GATOR1 complex; interaction is disrupted when SAMTOR binds S-adenosyl-L-methionine. Interacts with the KICSTOR complex; interaction is disrupted when SAMTOR binds S-adenosyl-L-methionine.

Its function is as follows. S-adenosyl-L-methionine-binding protein that acts as an inhibitor of mTORC1 signaling via interaction with the GATOR1 and KICSTOR complexes. Acts as a sensor of S-adenosyl-L-methionine to signal methionine sufficiency to mTORC1: in presence of methionine, binds S-adenosyl-L-methionine, leading to disrupt interaction with the GATOR1 and KICSTOR complexes and promote mTORC1 signaling. Upon methionine starvation, S-adenosyl-L-methionine levels are reduced, thereby promoting the association with GATOR1 and KICSTOR, leading to inhibit mTORC1 signaling. Probably also acts as a S-adenosyl-L-methionine-dependent methyltransferase. The chain is S-adenosylmethionine sensor upstream of mTORC1 from Gallus gallus (Chicken).